Consider the following 139-residue polypeptide: Nucleoside diphosphate kinase (139 aa).

ATP contacts are provided by Lys11, Phe59, Arg87, Thr93, Arg104, and Asn114. His117 functions as the Pros-phosphohistidine intermediate in the catalytic mechanism.

Belongs to the NDK family. As to quaternary structure, homotetramer. Mg(2+) is required as a cofactor.

The protein resides in the cytoplasm. It catalyses the reaction a 2'-deoxyribonucleoside 5'-diphosphate + ATP = a 2'-deoxyribonucleoside 5'-triphosphate + ADP. It carries out the reaction a ribonucleoside 5'-diphosphate + ATP = a ribonucleoside 5'-triphosphate + ADP. Major role in the synthesis of nucleoside triphosphates other than ATP. The ATP gamma phosphate is transferred to the NDP beta phosphate via a ping-pong mechanism, using a phosphorylated active-site intermediate. The sequence is that of Nucleoside diphosphate kinase from Wolbachia pipientis wMel.